Reading from the N-terminus, the 354-residue chain is UDP-glucose 4-epimerase GEPI42 (354 aa).

Residue threonine 11–leucine 42 coordinates NAD(+). Residue serine 137 participates in substrate binding. Tyrosine 161 serves as the catalytic Proton acceptor.

The protein belongs to the NAD(P)-dependent epimerase/dehydratase family. Requires NAD(+) as cofactor.

It catalyses the reaction UDP-alpha-D-glucose = UDP-alpha-D-galactose. Its pathway is carbohydrate metabolism; galactose metabolism. This chain is UDP-glucose 4-epimerase GEPI42, found in Cyamopsis tetragonoloba (Guar).